Reading from the N-terminus, the 256-residue chain is Large ribosomal subunit protein bL28m (256 aa).

A mitochondrion-targeting transit peptide spans 1-55 (MPLHKVPVGLWKRLRLREGIYSRLPAHYLRSLEEARTPTPVHFRPHGAKFKINPK).

This sequence belongs to the bacterial ribosomal protein bL28 family. In terms of assembly, component of the mitochondrial ribosome large subunit (39S) which comprises a 16S rRNA and about 50 distinct proteins. Interacts with OXA1L.

It is found in the mitochondrion. The protein is Large ribosomal subunit protein bL28m (MRPL28) of Bos taurus (Bovine).